The sequence spans 461 residues: Phosphoglucosamine mutase (461 aa).

Serine 107 (phosphoserine intermediate) is an active-site residue. Mg(2+) contacts are provided by serine 107, aspartate 254, aspartate 256, and aspartate 258. Position 107 is a phosphoserine (serine 107).

This sequence belongs to the phosphohexose mutase family. It depends on Mg(2+) as a cofactor. In terms of processing, activated by phosphorylation.

It carries out the reaction alpha-D-glucosamine 1-phosphate = D-glucosamine 6-phosphate. In terms of biological role, catalyzes the conversion of glucosamine-6-phosphate to glucosamine-1-phosphate. The sequence is that of Phosphoglucosamine mutase from Bifidobacterium longum subsp. infantis (strain ATCC 15697 / DSM 20088 / JCM 1222 / NCTC 11817 / S12).